The chain runs to 291 residues: ATP synthase subunit a (291 aa).

Transmembrane regions (helical) follow at residues 50-70 (LDSM…FWIV), 108-128 (IAPL…MDLI), 161-181 (DPNI…FYSI), 203-223 (PVAK…TFLA), 241-261 (LIFI…SVPW), and 262-282 (AIFH…LTIV).

It belongs to the ATPase A chain family. As to quaternary structure, F-type ATPases have 2 components, CF(1) - the catalytic core - and CF(0) - the membrane proton channel. CF(1) has five subunits: alpha(3), beta(3), gamma(1), delta(1), epsilon(1). CF(0) has three main subunits: a(1), b(2) and c(9-12). The alpha and beta chains form an alternating ring which encloses part of the gamma chain. CF(1) is attached to CF(0) by a central stalk formed by the gamma and epsilon chains, while a peripheral stalk is formed by the delta and b chains.

Its subcellular location is the cell inner membrane. Key component of the proton channel; it plays a direct role in the translocation of protons across the membrane. The protein is ATP synthase subunit a of Acinetobacter baumannii (strain SDF).